The sequence spans 975 residues: Glycine dehydrogenase (decarboxylating) (975 aa).

Residue Lys-723 is modified to N6-(pyridoxal phosphate)lysine.

It belongs to the GcvP family. The glycine cleavage system is composed of four proteins: P, T, L and H. Pyridoxal 5'-phosphate serves as cofactor.

It catalyses the reaction N(6)-[(R)-lipoyl]-L-lysyl-[glycine-cleavage complex H protein] + glycine + H(+) = N(6)-[(R)-S(8)-aminomethyldihydrolipoyl]-L-lysyl-[glycine-cleavage complex H protein] + CO2. Its function is as follows. The glycine cleavage system catalyzes the degradation of glycine. The P protein binds the alpha-amino group of glycine through its pyridoxal phosphate cofactor; CO(2) is released and the remaining methylamine moiety is then transferred to the lipoamide cofactor of the H protein. This is Glycine dehydrogenase (decarboxylating) from Burkholderia thailandensis (strain ATCC 700388 / DSM 13276 / CCUG 48851 / CIP 106301 / E264).